We begin with the raw amino-acid sequence, 413 residues long: Serine hydroxymethyltransferase (413 aa).

(6S)-5,6,7,8-tetrahydrofolate-binding positions include leucine 116 and 120–122 (GHL). Lysine 225 carries the N6-(pyridoxal phosphate)lysine modification. A (6S)-5,6,7,8-tetrahydrofolate-binding site is contributed by 349-351 (SPF).

The protein belongs to the SHMT family. In terms of assembly, homodimer. Requires pyridoxal 5'-phosphate as cofactor.

The protein localises to the cytoplasm. It carries out the reaction (6R)-5,10-methylene-5,6,7,8-tetrahydrofolate + glycine + H2O = (6S)-5,6,7,8-tetrahydrofolate + L-serine. It functions in the pathway one-carbon metabolism; tetrahydrofolate interconversion. It participates in amino-acid biosynthesis; glycine biosynthesis; glycine from L-serine: step 1/1. Catalyzes the reversible interconversion of serine and glycine with tetrahydrofolate (THF) serving as the one-carbon carrier. This reaction serves as the major source of one-carbon groups required for the biosynthesis of purines, thymidylate, methionine, and other important biomolecules. Also exhibits THF-independent aldolase activity toward beta-hydroxyamino acids, producing glycine and aldehydes, via a retro-aldol mechanism. The protein is Serine hydroxymethyltransferase of Levilactobacillus brevis (strain ATCC 367 / BCRC 12310 / CIP 105137 / JCM 1170 / LMG 11437 / NCIMB 947 / NCTC 947) (Lactobacillus brevis).